Here is a 326-residue protein sequence, read N- to C-terminus: Acetyl-coenzyme A carboxylase carboxyl transferase subunit alpha (326 aa).

Positions 45-298 (LEARAMQLRE…KQVLLENLDE (254 aa)) constitute a CoA carboxyltransferase C-terminal domain.

It belongs to the AccA family. Acetyl-CoA carboxylase is a heterohexamer composed of biotin carboxyl carrier protein (AccB), biotin carboxylase (AccC) and two subunits each of ACCase subunit alpha (AccA) and ACCase subunit beta (AccD).

It is found in the cytoplasm. It carries out the reaction N(6)-carboxybiotinyl-L-lysyl-[protein] + acetyl-CoA = N(6)-biotinyl-L-lysyl-[protein] + malonyl-CoA. It participates in lipid metabolism; malonyl-CoA biosynthesis; malonyl-CoA from acetyl-CoA: step 1/1. In terms of biological role, component of the acetyl coenzyme A carboxylase (ACC) complex. First, biotin carboxylase catalyzes the carboxylation of biotin on its carrier protein (BCCP) and then the CO(2) group is transferred by the carboxyltransferase to acetyl-CoA to form malonyl-CoA. In Nostoc punctiforme (strain ATCC 29133 / PCC 73102), this protein is Acetyl-coenzyme A carboxylase carboxyl transferase subunit alpha.